The primary structure comprises 357 residues: uncharacterized protein (357 aa).

This is an uncharacterized protein from Mycoplasma pneumoniae (strain ATCC 29342 / M129 / Subtype 1) (Mycoplasmoides pneumoniae).